The chain runs to 353 residues: Mannonate dehydratase (353 aa).

This sequence belongs to the mannonate dehydratase family. The cofactor is Fe(2+). It depends on Mn(2+) as a cofactor.

The enzyme catalyses D-mannonate = 2-dehydro-3-deoxy-D-gluconate + H2O. It participates in carbohydrate metabolism; pentose and glucuronate interconversion. Catalyzes the dehydration of D-mannonate. This chain is Mannonate dehydratase, found in Burkholderia cenocepacia (strain ATCC BAA-245 / DSM 16553 / LMG 16656 / NCTC 13227 / J2315 / CF5610) (Burkholderia cepacia (strain J2315)).